Here is a 719-residue protein sequence, read N- to C-terminus: Developmental regulator flbA (719 aa).

Polar residues predominate over residues 1–17 (MPTSISTAPLSQGSPPS). 3 disordered regions span residues 1–39 (MPTSISTAPLSQGSPPSSLIDYQPQSVPSSSSPPPSTAA), 117–141 (IGSTTNSSLRQSASSGSLQKHSRKA), and 155–190 (LSPPLSDGSGSSEQSSSAPFEPLSAVTEQPNPAAER). Composition is skewed to low complexity over residues 123 to 135 (SSLRQSASSGSLQ) and 158 to 171 (PLSDGSGSSEQSSS). Residues 214-411 (QTSSRLLRMT…QDGPNVKSSV (198 aa)) are fungal-DR. The 87-residue stretch at 425 to 511 (GLVGVKMARE…SKNAIYAITE (87 aa)) folds into the DEP domain. Residues 540–685 (SNNARLNHIL…FLRDPKYSAI (146 aa)) form the RGS domain. The interval 694–719 (LIGGGRSYSPTPGNVPERSMSRSQRS) is disordered.

Functionally, required for asexual sporulation and normal colony development. May be involved in brlA activation. Could play a regulatory role in controlling the flug-initiated signal transduction pathway that triggers the asexual reproduction. In Emericella nidulans (strain FGSC A4 / ATCC 38163 / CBS 112.46 / NRRL 194 / M139) (Aspergillus nidulans), this protein is Developmental regulator flbA (flbA).